The chain runs to 794 residues: Lon protease (794 aa).

The Lon N-terminal domain occupies 13-204 (VPLYPLREII…KVYMHLTNEV (192 aa)). 356-363 (GPPGVGKT) serves as a coordination point for ATP. The Lon proteolytic domain maps to 592–773 (KDRVGVATGL…REVFVQALNP (182 aa)). Catalysis depends on residues Ser-679 and Lys-722. A compositionally biased stretch (low complexity) spans 774-788 (TSPAPTAATSARTPA). Positions 774 to 794 (TSPAPTAATSARTPAGAPPPQ) are disordered.

The protein belongs to the peptidase S16 family. Homohexamer. Organized in a ring with a central cavity.

Its subcellular location is the cytoplasm. It carries out the reaction Hydrolysis of proteins in presence of ATP.. Functionally, ATP-dependent serine protease that mediates the selective degradation of mutant and abnormal proteins as well as certain short-lived regulatory proteins. Required for cellular homeostasis and for survival from DNA damage and developmental changes induced by stress. Degrades polypeptides processively to yield small peptide fragments that are 5 to 10 amino acids long. Binds to DNA in a double-stranded, site-specific manner. This is Lon protease from Citrifermentans bemidjiense (strain ATCC BAA-1014 / DSM 16622 / JCM 12645 / Bem) (Geobacter bemidjiensis).